The chain runs to 63 residues: uncharacterized protein (63 aa).

This is an uncharacterized protein from Archaeoglobus fulgidus (strain ATCC 49558 / DSM 4304 / JCM 9628 / NBRC 100126 / VC-16).